Here is a 1232-residue protein sequence, read N- to C-terminus: Protein transport protein sec-16A.1 (1232 aa).

6 disordered regions span residues 18–134 (GASG…SGYA), 172–193 (RNGF…EEDE), 815–843 (PVQE…KWHD), 866–942 (KPIA…VVPE), 972–1069 (QPIP…PQKQ), and 1140–1232 (PHLM…QNND). Over residues 26–37 (DWNNPYNASPPS) the composition is skewed to polar residues. The segment covering 67 to 76 (RPILIQPARP) has biased composition (low complexity). Residues 78–100 (SQKSNRQGTGMSNGSRGLNSTFN) are compositionally biased toward polar residues. Positions 817–836 (QESQQHVPQPQPVENKSISS) are enriched in polar residues. Residues 896 to 914 (SSVTVAASASRTSTLTSST) are compositionally biased toward low complexity. 3 stretches are compositionally biased toward polar residues: residues 1046–1060 (QQAT…NAKT), 1149–1159 (SNKSSTNSLRS), and 1168–1178 (YLQSGMATSQA). Low complexity predominate over residues 1194–1203 (PMSFSFMPAP). The segment covering 1222-1232 (PSESLSKQNND) has biased composition (polar residues).

It belongs to the SEC16 family. Interacts with tfg-1 (via N-terminus); the interaction is direct and is required for both the localization of tfg-1 and to maintain the distribution of sec-16A.1 at endoplasmic reticulum exit sites (ERES).

Its subcellular location is the endoplasmic reticulum. The protein resides in the endoplasmic reticulum-Golgi intermediate compartment. In terms of biological role, plays a role in the organization of the endoplasmic reticulum exit sites (ERES), also known as transitional endoplasmic reticulum (tER). In association with tfg-1, accumulates at ERES to positively regulate secretory cargo trafficking from the endoplasmic reticulum to the endoplasmic reticulum-Golgi intermediate compartment (ERGIC) and Golgi apparatus. The protein is Protein transport protein sec-16A.1 of Caenorhabditis elegans.